Here is a 1193-residue protein sequence, read N- to C-terminus: Inner capsid protein S2 (1193 aa).

Basic and acidic residues-rich tracts occupy residues 1 to 10 (MKSFKWKENT) and 19 to 64 (TNEK…RPED). The interval 1 to 64 (MKSFKWKENT…GITNKNRPED (64 aa)) is disordered.

It belongs to the turreted BTV-fold inner capsid family. In terms of assembly, homodecamer; each decamer is made up of two conformers of VP2, called VP2A and VP2B. 12 homodecamers assemble to form an icosahedral capsid.

It localises to the virion. In terms of biological role, inner capsid protein that self-assembles to form an icosahedral capsid with a T=2 symmetry, which consists of 120 copies of VP2, with channels at each of its five-fold vertices. This capsid constitutes the innermost concentric layer of the viral mature particle. The protein is Inner capsid protein S2 (S2) of Saccharum officinarum (Sugarcane).